A 359-amino-acid polypeptide reads, in one-letter code: tRNA pseudouridine synthase B (359 aa).

Catalysis depends on aspartate 63, which acts as the Nucleophile.

This sequence belongs to the pseudouridine synthase TruB family. Type 1 subfamily.

The enzyme catalyses uridine(55) in tRNA = pseudouridine(55) in tRNA. Functionally, responsible for synthesis of pseudouridine from uracil-55 in the psi GC loop of transfer RNAs. This Psychrobacter cryohalolentis (strain ATCC BAA-1226 / DSM 17306 / VKM B-2378 / K5) protein is tRNA pseudouridine synthase B.